A 66-amino-acid chain; its full sequence is Large ribosomal subunit protein bL35 (66 aa).

Positions 1–26 are enriched in basic residues; sequence MPKMKTHRGSAKRFKKTGSGKLKRSH. The tract at residues 1-45 is disordered; sequence MPKMKTHRGSAKRFKKTGSGKLKRSHAYTSHLFANKSQKQKRKLR.

Belongs to the bacterial ribosomal protein bL35 family.

The polypeptide is Large ribosomal subunit protein bL35 (Bacillus velezensis (strain DSM 23117 / BGSC 10A6 / LMG 26770 / FZB42) (Bacillus amyloliquefaciens subsp. plantarum)).